A 187-amino-acid chain; its full sequence is MKSGQAEIVETSKGIQKSGLMSRRIAILEFILRIVAFFNTIGSAILMGTTHETLPFFTQFIRFQAEYNDLPALTFFVVANAVVSGYLIMSLTLAFVHIVKRKTQNTRILLIVLDVAMLGLLSAGASSAAAIVYLAHNGNNKTNWFAICQQFNSFCERISGSLIGSFIAVVLLILLILLSAIALSRRH.

The Cytoplasmic portion of the chain corresponds to Met-1–Arg-24. The helical transmembrane segment at Ile-25–Ile-45 threads the bilayer. The Extracellular segment spans residues Leu-46–Thr-74. The chain crosses the membrane as a helical span at residues Phe-75 to Phe-95. At Val-96–Arg-107 the chain is on the cytoplasmic side. A helical transmembrane segment spans residues Ile-108–Ala-128. Residues Ala-129–Ser-161 lie on the Extracellular side of the membrane. An N-linked (GlcNAc...) asparagine glycan is attached at Asn-140. A helical membrane pass occupies residues Leu-162–Ala-182. Topologically, residues Leu-183–His-187 are cytoplasmic.

The protein belongs to the Casparian strip membrane proteins (CASP) family. In terms of assembly, homodimer and heterodimers.

The protein localises to the cell membrane. Its function is as follows. Regulates membrane-cell wall junctions and localized cell wall deposition. Required for establishment of the Casparian strip membrane domain (CSD) and the subsequent formation of Casparian strips, a cell wall modification of the root endodermis that determines an apoplastic barrier between the intraorganismal apoplasm and the extraorganismal apoplasm and prevents lateral diffusion. This is Casparian strip membrane protein 5 from Arabidopsis lyrata subsp. lyrata (Lyre-leaved rock-cress).